A 372-amino-acid polypeptide reads, in one-letter code: Cyclic GMP-AMP synthase-like receptor (372 aa).

Thr-68 contributes to the GTP binding site. ATP is bound by residues Ser-70 and 82-84 (EFD). Mg(2+) is bound by residues Glu-82, Asp-84, and Asp-190. Residues Asp-190 and 236–243 (LVCAPYWE) each bind GTP. ATP-binding positions include 240–243 (PYWE), Lys-261, and 274–278 (SYTIK).

This sequence belongs to the mab-21 family. Mg(2+) serves as cofactor. The cofactor is Mn(2+).

It carries out the reaction GTP + ATP = 3',2'-cGAMP + 2 diphosphate. It catalyses the reaction GTP + ATP = pppA(2'-5')pG + diphosphate. The catalysed reaction is pppA(2'-5')pG = 3',2'-cGAMP + diphosphate. The enzyme activity is specifically activated by double-stranded RNA (dsRNA). Its function is as follows. Nucleotidyltransferase that catalyzes the formation of cyclic GMP-AMP (3',2'-cGAMP) from ATP and GTP and plays a key role in innate immunity. Synthesizes 3',2'-cGAMP in a two-step reaction through production of the linear intermediate pppA(2'-5')pG. Acts as a key sensor of double-stranded RNA (dsRNA), the presence of dsRNA in the cytoplasm being a danger signal that triggers the immune responses. Directly binds dsRNA longer than 15 bp, activating the nucleotidyltransferase activity, leading to synthesis of 3',2'-cGAMP, a second messenger that binds to and activates Sting, thereby triggering the antiviral immune response via activation of the NF-kappa-B transcription factor Rel (Relish). In Drosophila eugracilis (Fruit fly), this protein is Cyclic GMP-AMP synthase-like receptor.